The primary structure comprises 507 residues: ATP synthase subunit alpha, mitochondrial (507 aa).

171-178 (GDRQTGKT) is a binding site for ATP.

It belongs to the ATPase alpha/beta chains family. In terms of assembly, F-type ATPases have 2 components, CF(1) - the catalytic core - and CF(0) - the membrane proton channel. CF(1) has five subunits: alpha(3), beta(3), gamma(1), delta(1), epsilon(1). CF(0) has three main subunits: a, b and c.

It is found in the mitochondrion. The protein localises to the mitochondrion inner membrane. In terms of biological role, mitochondrial membrane ATP synthase (F(1)F(0) ATP synthase or Complex V) produces ATP from ADP in the presence of a proton gradient across the membrane which is generated by electron transport complexes of the respiratory chain. F-type ATPases consist of two structural domains, F(1) - containing the extramembraneous catalytic core, and F(0) - containing the membrane proton channel, linked together by a central stalk and a peripheral stalk. During catalysis, ATP synthesis in the catalytic domain of F(1) is coupled via a rotary mechanism of the central stalk subunits to proton translocation. Subunits alpha and beta form the catalytic core in F(1). Rotation of the central stalk against the surrounding alpha(3)beta(3) subunits leads to hydrolysis of ATP in three separate catalytic sites on the beta subunits. Subunit alpha does not bear the catalytic high-affinity ATP-binding sites. The polypeptide is ATP synthase subunit alpha, mitochondrial (ATPA) (Pisum sativum (Garden pea)).